The following is a 283-amino-acid chain: Serine protease 57 (283 aa).

Positions 1 to 31 (MGLGLRGWGRPLLTVATALMLPVKPPAGSWG) are cleaved as a signal peptide. The region spanning 34-263 (IIGGHEVTPH…FVAWIWDVVR (230 aa)) is the Peptidase S1 domain. A disulfide bond links cysteine 59 and cysteine 75. Residues histidine 74 and aspartate 122 each act as charge relay system in the active site. Asparagine 129 and asparagine 189 each carry an N-linked (GlcNAc...) asparagine glycan. Disulfide bonds link cysteine 157–cysteine 224, cysteine 188–cysteine 202, and cysteine 214–cysteine 239. Serine 218 acts as the Charge relay system in catalysis.

This sequence belongs to the peptidase S1 family. Post-translationally, after cleavage of the signal peptide, the N-terminus is probably further processed by CTSC. Processing by CTSC is probably required for accumulation in cytoplasmic granules; in the absence of CTSC the protein does not accumulate. N-glycosylated. Detected in peripheral blood neutrophil granulocytes, but not in other types of leukocytes. Detected in neutrophils and neutrophil precursors in bone marrow (at protein level). Detected in myeloblasts and promyelocytes in bone marrow.

The protein localises to the cytoplasmic granule lumen. It is found in the secreted. With respect to regulation, inhibited by SERPINA1, SERPINC1 and SERPING1. Its function is as follows. Serine protease that cleaves preferentially after Arg residues. Can also cleave after citrulline (deimidated arginine) and methylarginine residues. This chain is Serine protease 57 (PRSS57), found in Homo sapiens (Human).